The sequence spans 353 residues: Protein RecA (353 aa).

75–82 serves as a coordination point for ATP; sequence GPESSGKT.

The protein belongs to the RecA family.

It localises to the cytoplasm. Can catalyze the hydrolysis of ATP in the presence of single-stranded DNA, the ATP-dependent uptake of single-stranded DNA by duplex DNA, and the ATP-dependent hybridization of homologous single-stranded DNAs. It interacts with LexA causing its activation and leading to its autocatalytic cleavage. This chain is Protein RecA, found in Cupriavidus pinatubonensis (strain JMP 134 / LMG 1197) (Cupriavidus necator (strain JMP 134)).